Consider the following 613-residue polypeptide: Transcription factor Sp2 (613 aa).

A disordered region spans residues methionine 1–proline 32. Polar residues predominate over residues alanine 23–proline 32. Position 78 is a phosphoserine (serine 78). A compositionally biased stretch (polar residues) spans threonine 225–serine 235. Residues threonine 225–proline 258 are disordered. The 9aaTAD; inactive motif lies at glycine 361–glutamine 369. A compositionally biased stretch (low complexity) spans proline 372 to serine 389. Positions proline 372 to alanine 404 are disordered. 3 C2H2-type zinc fingers span residues histidine 525–histidine 549, phenylalanine 555–histidine 579, and phenylalanine 585–histidine 607.

This sequence belongs to the Sp1 C2H2-type zinc-finger protein family.

It is found in the nucleus. Its function is as follows. Binds to GC box promoters elements and selectively activates mRNA synthesis from genes that contain functional recognition sites. This is Transcription factor Sp2 (SP2) from Homo sapiens (Human).